A 74-amino-acid polypeptide reads, in one-letter code: Cecropin-P2 (74 aa).

Positions 1–13 (MIFIYLLVQTAES) are cleaved as a signal peptide. Positions 45-74 (RRRFVVQQDTISPRLEVDERFLPNSVQEQI) are cleaved as a propeptide — removed in mature form.

Belongs to the cecropin family. Expressed in the body wall, intestine, uterus and ovary.

It is found in the secreted. In terms of biological role, has antibacterial activity against several Gram-positive and Gram-negative bacteria. Is weakly active against yeasts. Acts by a nonpore mechanism. This chain is Cecropin-P2 (ASCEC-2), found in Ascaris suum (Pig roundworm).